The primary structure comprises 108 residues: Pumilarin (108 aa).

The propeptide occupies 1–38 (MTETKNEIKLHVLFGALAVGFLMLALFSFSLQMLPVAD). A cross-link (cyclopeptide (Leu-Trp)) is located at residues 39–108 (LAKEFGIPGS…KKGRKAVIAW (70 aa)).

In terms of processing, the cross-link permits a high resistance to proteolysis. Is more resistant to specific proteases than to unspecific proteases.

It localises to the secreted. Its function is as follows. Cyclopeptide antibiotic that inhibits both Gram-positive and Gram-negative bacteria. Shows potent to weak activities against M.flavus (MIC=3 ug/ml), B.cereus (MIC=12 ug/ml), B.pumilus (MIC=12 ug/ml), E.coli (MIC=12 ug/ml), and S.pneumoniae (MIC=47 ug/ml). May act by forming pores. In Bacillus safensis, this protein is Pumilarin.